The chain runs to 146 residues: Hemoglobin subunit beta (146 aa).

An N-acetylvaline modification is found at valine 1. Residues 2–146 (HLTAEEKSAV…VATALAHKYH (145 aa)) form the Globin domain. Phosphothreonine is present on threonine 12. Phosphoserine is present on serine 44. Lysine 59 is modified (N6-acetyllysine). Residue histidine 63 participates in heme b binding. Lysine 82 carries the N6-acetyllysine modification. Histidine 92 contributes to the heme b binding site. Position 93 is an S-nitrosocysteine (cysteine 93). Lysine 144 carries the post-translational modification N6-acetyllysine.

The protein belongs to the globin family. As to quaternary structure, heterotetramer of two alpha chains and two beta chains. In terms of tissue distribution, red blood cells.

Functionally, involved in oxygen transport from the lung to the various peripheral tissues. This chain is Hemoglobin subunit beta (HBB), found in Cebus albifrons (White-fronted capuchin).